An 896-amino-acid polypeptide reads, in one-letter code: Glutamate receptor 2.4 (896 aa).

An N-terminal signal peptide occupies residues 1–24 (MKRHLNDVVLVFLVFIFGVKLGKG). Topologically, residues 25-565 (QNTTIQVINV…SSLIFFKPLT (541 aa)) are extracellular. Asparagine 26, asparagine 46, asparagine 53, asparagine 204, asparagine 267, asparagine 331, asparagine 341, and asparagine 527 each carry an N-linked (GlcNAc...) asparagine glycan. A helical transmembrane segment spans residues 566–586 (PGLWGMTLGSFFVVGFVVWIL). Residues 587–595 (EHRVNSEFT) are Cytoplasmic-facing. The helical transmembrane segment at 596–616 (GPPQYQISTMFWFAFSIMVFA) threads the bilayer. Residues 617–620 (PRER) are Cytoplasmic-facing. Residues 621-641 (VMSFTARVVVITWYFIVLVLT) form a helical membrane-spanning segment. The Extracellular segment spans residues 642–815 (QSYTASLSSL…VSFRKLSLDS (174 aa)). A helical transmembrane segment spans residues 816 to 836 (FLLLFVAAATVCTLALLKFVI). Residues 837 to 896 (CFLIQNRIILNDEFYRGKRMKEMWLKFMESDGESYISRVRSTCPQVLIQPREEDIDPING) lie on the Cytoplasmic side of the membrane.

Belongs to the glutamate-gated ion channel (TC 1.A.10.1) family. As to quaternary structure, may form heteromers. In terms of tissue distribution, expressed predominantly in roots.

The protein localises to the membrane. Functionally, glutamate-gated receptor that probably acts as a non-selective cation channel. May be involved in light-signal transduction and calcium homeostasis via the regulation of calcium influx into cells. This Arabidopsis thaliana (Mouse-ear cress) protein is Glutamate receptor 2.4 (GLR2.4).